Consider the following 81-residue polypeptide: Keratin-associated protein 19-3 (81 aa).

It belongs to the KRTAP type 19 family. As to quaternary structure, interacts with hair keratins.

Functionally, in the hair cortex, hair keratin intermediate filaments are embedded in an interfilamentous matrix, consisting of hair keratin-associated proteins (KRTAP), which are essential for the formation of a rigid and resistant hair shaft through their extensive disulfide bond cross-linking with abundant cysteine residues of hair keratins. The matrix proteins include the high-sulfur and high-glycine-tyrosine keratins. In Homo sapiens (Human), this protein is Keratin-associated protein 19-3 (KRTAP19-3).